Consider the following 301-residue polypeptide: Sulfate adenylyltransferase subunit 2 1 (301 aa).

The protein belongs to the PAPS reductase family. CysD subfamily. In terms of assembly, heterodimer composed of CysD, the smaller subunit, and CysN.

The catalysed reaction is sulfate + ATP + H(+) = adenosine 5'-phosphosulfate + diphosphate. Its pathway is sulfur metabolism; hydrogen sulfide biosynthesis; sulfite from sulfate: step 1/3. With CysN forms the ATP sulfurylase (ATPS) that catalyzes the adenylation of sulfate producing adenosine 5'-phosphosulfate (APS) and diphosphate, the first enzymatic step in sulfur assimilation pathway. APS synthesis involves the formation of a high-energy phosphoric-sulfuric acid anhydride bond driven by GTP hydrolysis by CysN coupled to ATP hydrolysis by CysD. This is Sulfate adenylyltransferase subunit 2 1 from Shewanella sediminis (strain HAW-EB3).